We begin with the raw amino-acid sequence, 426 residues long: Bile acid CoA-transferase BaiF (426 aa).

Catalysis depends on aspartate 168, which acts as the Nucleophile.

Belongs to the CoA-transferase III family.

It catalyses the reaction lithocholoyl-CoA + cholate = choloyl-CoA + lithocholate. It carries out the reaction deoxycholoyl-CoA + cholate = choloyl-CoA + deoxycholate. The catalysed reaction is allodeoxycholoyl-CoA + cholate = allodeoxycholate + choloyl-CoA. The enzyme catalyses allocholate + deoxycholoyl-CoA = allocholoyl-CoA + deoxycholate. It catalyses the reaction allocholate + lithocholoyl-CoA = allocholoyl-CoA + lithocholate. It carries out the reaction allocholate + allodeoxycholoyl-CoA = allocholoyl-CoA + allodeoxycholate. The catalysed reaction is lithocholoyl-CoA + chenodeoxycholate = chenodeoxycholoyl-CoA + lithocholate. The enzyme catalyses ursodeoxycholate + deoxycholoyl-CoA = ursodeoxycholoyl-CoA + deoxycholate. It catalyses the reaction ursodeoxycholate + lithocholoyl-CoA = ursodeoxycholoyl-CoA + lithocholate. It carries out the reaction allodeoxycholoyl-CoA + ursodeoxycholate = ursodeoxycholoyl-CoA + allodeoxycholate. The catalysed reaction is beta-muricholate + lithocholoyl-CoA = beta-muricholoyl-CoA + lithocholate. The enzyme catalyses beta-muricholate + deoxycholoyl-CoA = beta-muricholoyl-CoA + deoxycholate. It catalyses the reaction beta-muricholate + allodeoxycholoyl-CoA = beta-muricholoyl-CoA + allodeoxycholate. It carries out the reaction choloyl-CoA + H2O = cholate + CoA + H(+). The catalysed reaction is chenodeoxycholoyl-CoA + H2O = chenodeoxycholate + CoA + H(+). It participates in lipid metabolism; bile acid biosynthesis. Its function is as follows. Functions in the bile acid 7alpha-dehydroxylation pathway, which forms secondary bile acids via the 7alpha-dehydroxylation of primary bile acids, and is carried out by intestinal anaerobic bacteria. Acts as a bile acid CoA transferase with broad bile acid substrate specificity. Catalyzes the transfer of the CoA moiety of secondary bile acid-CoA compounds to primary bile acids. Can use lithocholoyl-CoA, deoxycholoyl-CoA and allodeoxycholoyl-CoA as bile acid CoA donors and cholate, allocholate, chenodeoxycholate, ursodeoxycholate, and beta-muricholate as bile acid CoA acceptors. Also displays CoA hydrolase activity, being able to catalyze the hydrolysis of choloyl-CoA, 3-dehydrocholoyl-CoA, and chenodeoxycholoyl-CoA, releasing CoA and the corresponding free bile acid. However, this latter activity may not represent the actual activity of this enzyme, since using a transferase rather than hydrolase, the bacteria conserve the thioester bond energy, saving ATP molecules. Shows no hydrolytic activity with acetyl-CoA, isovaleryl-CoA, palmitoyl-CoA, or phenylacetyl-CoA as substrates. The chain is Bile acid CoA-transferase BaiF from Clostridium scindens (strain JCM 10418 / VPI 12708).